Consider the following 596-residue polypeptide: Fc receptor-like protein 5 (596 aa).

Residues 1 to 26 (MSGSFSPCVVFTQMWLTLLVVTPVNG) form the signal peptide. Residues 27–496 (QHEAAQQSVV…MTKNRSVPMA (470 aa)) lie on the Extracellular side of the membrane. 5 consecutive Ig-like C2-type domains span residues 34 to 115 (SVVS…VEFS), 106 to 199 (PSMH…NTVV), 207 to 294 (PRPV…TAFI), 296 to 384 (PVQR…SFVS), and 398 to 483 (PVLT…IRIS). 3 cysteine pairs are disulfide-bonded: cysteine 55-cysteine 99, cysteine 137-cysteine 181, and cysteine 228-cysteine 277. Asparagine 324 is a glycosylation site (N-linked (GlcNAc...) asparagine). 2 disulfides stabilise this stretch: cysteine 325–cysteine 373 and cysteine 419–cysteine 466. Asparagine 436 carries N-linked (GlcNAc...) asparagine glycosylation. The helical transmembrane segment at 497 to 517 (AGITVGLLIMAVGVFLFYCWF) threads the bilayer. Residues 518 to 596 (SRKAGGKPTS…RSRCQMAEKK (79 aa)) are Cytoplasmic-facing. Disordered stretches follow at residues 522–544 (GGKP…PTYY) and 561–596 (EENV…AEKK). Over residues 577–596 (KHADQESESPRSRCQMAEKK) the composition is skewed to basic and acidic residues.

In terms of assembly, interacts with CR2. Interacts with CD19. In terms of processing, phosphorylated on cytoplasmic tyrosines; required for interaction with protein tyrosine phosphatases and protein tyrosine kinases. As to expression, preferentially expressed in marginal zone B cells.

Its subcellular location is the cell membrane. Plays an important role in B-cell response to antigen that acts both as a negative or positive coreceptor. Inhibits B-cell receptor (BCR) signaling in the absence of CR2 stimulation but engagement with CR2 and the BCR lead to a superior calcium response compared to CR2 and BCR costimulation. May be involved in B-cell development and differentiation in peripheral lymphoid organs and may be useful markers of B-cell stages. May have an immunoregulatory role in marginal zone B-cells. May play a role in fertilization. This is Fc receptor-like protein 5 (Fcrl5) from Mus musculus (Mouse).